A 107-amino-acid polypeptide reads, in one-letter code: Anaphase-promoting complex subunit 14 (107 aa).

In terms of assembly, the APC/C is composed of at least 13 subunits: apc1, apc2, nuc2, apc4, apc5, cut9, apc8, apc10, apc11, hcn1, apc13, apc14 and apc15.

The protein resides in the ascus epiplasm. In terms of biological role, component of the anaphase promoting complex/cyclosome (APC/C), a cell cycle-regulated E3 ubiquitin-protein ligase complex that controls progression through mitosis and the G1 phase of the cell cycle. The APC/C is thought to confer substrate specificity and, in the presence of ubiquitin-conjugating E2 enzymes, it catalyzes the formation of protein-ubiquitin conjugates that are subsequently degraded by the 26S proteasome. Appears to play a role in spore wall formation. The polypeptide is Anaphase-promoting complex subunit 14 (Schizosaccharomyces pombe (strain 972 / ATCC 24843) (Fission yeast)).